A 300-amino-acid chain; its full sequence is Ribosomal RNA small subunit methyltransferase H (300 aa).

S-adenosyl-L-methionine-binding positions include 33-35, Asp53, Phe78, Asp97, and Gln104; that span reads GGH.

This sequence belongs to the methyltransferase superfamily. RsmH family.

It localises to the cytoplasm. It carries out the reaction cytidine(1402) in 16S rRNA + S-adenosyl-L-methionine = N(4)-methylcytidine(1402) in 16S rRNA + S-adenosyl-L-homocysteine + H(+). Specifically methylates the N4 position of cytidine in position 1402 (C1402) of 16S rRNA. The protein is Ribosomal RNA small subunit methyltransferase H of Karelsulcia muelleri (strain GWSS) (Sulcia muelleri).